The following is a 363-amino-acid chain: Phosphoserine aminotransferase (363 aa).

Arg41 provides a ligand contact to L-glutamate. Pyridoxal 5'-phosphate contacts are provided by residues Ala75 to Ser76, Trp100, Thr155, Asp175, and Gln198. Lys199 carries the N6-(pyridoxal phosphate)lysine modification. Asn239–Thr240 lines the pyridoxal 5'-phosphate pocket.

Belongs to the class-V pyridoxal-phosphate-dependent aminotransferase family. SerC subfamily. Homodimer. Pyridoxal 5'-phosphate serves as cofactor.

It is found in the cytoplasm. The enzyme catalyses O-phospho-L-serine + 2-oxoglutarate = 3-phosphooxypyruvate + L-glutamate. The catalysed reaction is 4-(phosphooxy)-L-threonine + 2-oxoglutarate = (R)-3-hydroxy-2-oxo-4-phosphooxybutanoate + L-glutamate. Its pathway is amino-acid biosynthesis; L-serine biosynthesis; L-serine from 3-phospho-D-glycerate: step 2/3. In terms of biological role, catalyzes the reversible conversion of 3-phosphohydroxypyruvate to phosphoserine and of 3-hydroxy-2-oxo-4-phosphonooxybutanoate to phosphohydroxythreonine. In Streptococcus suis (strain 98HAH33), this protein is Phosphoserine aminotransferase.